An 80-amino-acid polypeptide reads, in one-letter code: Exodeoxyribonuclease 7 small subunit (80 aa).

It belongs to the XseB family. As to quaternary structure, heterooligomer composed of large and small subunits.

The protein localises to the cytoplasm. It carries out the reaction Exonucleolytic cleavage in either 5'- to 3'- or 3'- to 5'-direction to yield nucleoside 5'-phosphates.. Functionally, bidirectionally degrades single-stranded DNA into large acid-insoluble oligonucleotides, which are then degraded further into small acid-soluble oligonucleotides. In Pseudoalteromonas translucida (strain TAC 125), this protein is Exodeoxyribonuclease 7 small subunit.